Consider the following 375-residue polypeptide: Holliday junction branch migration complex subunit RuvB (375 aa).

Residues 1-22 show a composition bias toward polar residues; that stretch reads MAIVSSKQSPQPDGSKKPSQAK. The disordered stretch occupies residues 1 to 44; it reads MAIVSSKQSPQPDGSKKPSQAKSVKKSVEHSKPQQTDALLQPEA. The large ATPase domain (RuvB-L) stretch occupies residues 13 to 218; sequence DGSKKPSQAK…FGFVQRLRFY (206 aa). ATP contacts are provided by residues Leu57, Arg58, Gly99, Lys102, Thr103, Thr104, 165–167, Arg208, Tyr218, and Arg255; that span reads EDF. Position 103 (Thr103) interacts with Mg(2+). Positions 219–289 are small ATPAse domain (RuvB-S); sequence EADELGQIVL…IAQEALELFN (71 aa). Positions 292–375 are head domain (RuvB-H); that stretch reads PCGLDWTDRR…PPDEQMRLLS (84 aa). The DNA site is built by Arg347 and Arg352.

This sequence belongs to the RuvB family. In terms of assembly, homohexamer. Forms an RuvA(8)-RuvB(12)-Holliday junction (HJ) complex. HJ DNA is sandwiched between 2 RuvA tetramers; dsDNA enters through RuvA and exits via RuvB. An RuvB hexamer assembles on each DNA strand where it exits the tetramer. Each RuvB hexamer is contacted by two RuvA subunits (via domain III) on 2 adjacent RuvB subunits; this complex drives branch migration. In the full resolvosome a probable DNA-RuvA(4)-RuvB(12)-RuvC(2) complex forms which resolves the HJ.

It is found in the cytoplasm. It carries out the reaction ATP + H2O = ADP + phosphate + H(+). Functionally, the RuvA-RuvB-RuvC complex processes Holliday junction (HJ) DNA during genetic recombination and DNA repair, while the RuvA-RuvB complex plays an important role in the rescue of blocked DNA replication forks via replication fork reversal (RFR). RuvA specifically binds to HJ cruciform DNA, conferring on it an open structure. The RuvB hexamer acts as an ATP-dependent pump, pulling dsDNA into and through the RuvAB complex. RuvB forms 2 homohexamers on either side of HJ DNA bound by 1 or 2 RuvA tetramers; 4 subunits per hexamer contact DNA at a time. Coordinated motions by a converter formed by DNA-disengaged RuvB subunits stimulates ATP hydrolysis and nucleotide exchange. Immobilization of the converter enables RuvB to convert the ATP-contained energy into a lever motion, pulling 2 nucleotides of DNA out of the RuvA tetramer per ATP hydrolyzed, thus driving DNA branch migration. The RuvB motors rotate together with the DNA substrate, which together with the progressing nucleotide cycle form the mechanistic basis for DNA recombination by continuous HJ branch migration. Branch migration allows RuvC to scan DNA until it finds its consensus sequence, where it cleaves and resolves cruciform DNA. This is Holliday junction branch migration complex subunit RuvB from Acaryochloris marina (strain MBIC 11017).